The primary structure comprises 250 residues: 23S rRNA (guanosine-2'-O-)-methyltransferase RlmB (250 aa).

S-adenosyl-L-methionine is bound by residues Gly-198, Ile-218, and Leu-227.

Belongs to the class IV-like SAM-binding methyltransferase superfamily. RNA methyltransferase TrmH family. RlmB subfamily.

It is found in the cytoplasm. It catalyses the reaction guanosine(2251) in 23S rRNA + S-adenosyl-L-methionine = 2'-O-methylguanosine(2251) in 23S rRNA + S-adenosyl-L-homocysteine + H(+). Its function is as follows. Specifically methylates the ribose of guanosine 2251 in 23S rRNA. The protein is 23S rRNA (guanosine-2'-O-)-methyltransferase RlmB of Coxiella burnetii (strain RSA 493 / Nine Mile phase I).